The sequence spans 312 residues: Methionyl-tRNA formyltransferase (312 aa).

(6S)-5,6,7,8-tetrahydrofolate is bound at residue 112-115 (SLLP).

Belongs to the Fmt family.

It catalyses the reaction L-methionyl-tRNA(fMet) + (6R)-10-formyltetrahydrofolate = N-formyl-L-methionyl-tRNA(fMet) + (6S)-5,6,7,8-tetrahydrofolate + H(+). Attaches a formyl group to the free amino group of methionyl-tRNA(fMet). The formyl group appears to play a dual role in the initiator identity of N-formylmethionyl-tRNA by promoting its recognition by IF2 and preventing the misappropriation of this tRNA by the elongation apparatus. This is Methionyl-tRNA formyltransferase from Magnetococcus marinus (strain ATCC BAA-1437 / JCM 17883 / MC-1).